The primary structure comprises 57 residues: MSPQTETKASVGFKAGVKDYKLTYYTPEYETKDTDILAAFRVTPQPGVPPEEAGAAV.

Residues 1–2 (MS) constitute a propeptide that is removed on maturation. Residue P3 is modified to N-acetylproline. N6,N6,N6-trimethyllysine is present on K14.

This sequence belongs to the RuBisCO large chain family. Type I subfamily. In terms of assembly, heterohexadecamer of 8 large chains and 8 small chains.

It localises to the plastid. It is found in the chloroplast. It catalyses the reaction 2 (2R)-3-phosphoglycerate + 2 H(+) = D-ribulose 1,5-bisphosphate + CO2 + H2O. It carries out the reaction D-ribulose 1,5-bisphosphate + O2 = 2-phosphoglycolate + (2R)-3-phosphoglycerate + 2 H(+). Functionally, ruBisCO catalyzes two reactions: the carboxylation of D-ribulose 1,5-bisphosphate, the primary event in carbon dioxide fixation, as well as the oxidative fragmentation of the pentose substrate in the photorespiration process. Both reactions occur simultaneously and in competition at the same active site. The polypeptide is Ribulose bisphosphate carboxylase large chain (rbcL) (Buxus sempervirens (Common box)).